We begin with the raw amino-acid sequence, 207 residues long: Outer-membrane lipoprotein carrier protein (207 aa).

Positions 1–22 (MKLSEKFCVFLFFLLFTSTTHA) are cleaved as a signal peptide.

It belongs to the LolA family. Monomer.

It localises to the periplasm. In terms of biological role, participates in the translocation of lipoproteins from the inner membrane to the outer membrane. Only forms a complex with a lipoprotein if the residue after the N-terminal Cys is not an aspartate (The Asp acts as a targeting signal to indicate that the lipoprotein should stay in the inner membrane). The chain is Outer-membrane lipoprotein carrier protein from Nitrosospira multiformis (strain ATCC 25196 / NCIMB 11849 / C 71).